Consider the following 691-residue polypeptide: DNA ligase (691 aa).

NAD(+) contacts are provided by residues 41–45 (DAEYD), 90–91 (SL), and E130. Catalysis depends on K132, which acts as the N6-AMP-lysine intermediate. NAD(+) is bound by residues R153, E190, K307, and K331. The Zn(2+) site is built by C425, C428, C443, and C449. Residues 610 to 691 (APQGVLAGKT…MHTLLEGHAR (82 aa)) form the BRCT domain.

This sequence belongs to the NAD-dependent DNA ligase family. LigA subfamily. The cofactor is Mg(2+). Mn(2+) serves as cofactor.

It catalyses the reaction NAD(+) + (deoxyribonucleotide)n-3'-hydroxyl + 5'-phospho-(deoxyribonucleotide)m = (deoxyribonucleotide)n+m + AMP + beta-nicotinamide D-nucleotide.. In terms of biological role, DNA ligase that catalyzes the formation of phosphodiester linkages between 5'-phosphoryl and 3'-hydroxyl groups in double-stranded DNA using NAD as a coenzyme and as the energy source for the reaction. It is essential for DNA replication and repair of damaged DNA. The polypeptide is DNA ligase (Burkholderia mallei (strain NCTC 10247)).